The chain runs to 439 residues: MASDDFDIVIEAMLEAPYKKEEDEQQRKEVKKDYPSNTTSSTSNSGNETSGSSTIGETSKKKRSRSHNKSRDRKRSRSRDRDRYRRRNSRSRSPGRQCRHRSRSWDRRHGSESRSRDHRREDRVHYRSPPLATGYRYGHSKSPHFREKSPVREPVDNLSPEERDARTVFCMQLAARIRPRDLEDFFSAVGKVRDVRIISDRNSRRSKGIAYVEFCEIQSVPLAIGLTGQRLLGVPIIVQASQAEKNRLAAMANNLQKGNGGPMRLYVGSLHFNITEDMLRGIFEPFGKIDNIVLMKDSDTGRSKGYGFITFSDSECARRALEQLNGFELAGRPMRVGHVTERLDGGTDITFPDGDQELDLGSAGGRFQLMAKLAEGAGIQLPSTAAAAAAAAAQAAALQLNGAVPLGALNPAALTALSPALNLASQCFQLSSLFTPQTM.

The segment at 13–159 (MLEAPYKKEE…PVREPVDNLS (147 aa)) is disordered. The span at 17–34 (PYKKEEDEQQRKEVKKDY) shows a compositional bias: basic and acidic residues. Residues 36–57 (SNTTSSTSNSGNETSGSSTIGE) show a composition bias toward low complexity. Over residues 60–90 (KKKRSRSHNKSRDRKRSRSRDRDRYRRRNSR) the composition is skewed to basic residues. The span at 103 to 125 (RSWDRRHGSESRSRDHRREDRVH) shows a compositional bias: basic and acidic residues. A phosphoserine mark is found at Ser-128 and Ser-149. Residues 144-159 (HFREKSPVREPVDNLS) show a composition bias toward basic and acidic residues. RRM domains are found at residues 166–243 (RTVF…ASQA) and 263–341 (MRLY…HVTE).

The protein belongs to the splicing factor SR family. In terms of processing, aryl sulfonamide anticancer drugs, such as indisulam (E7070) or E7820, promote ubiquitination and subsequent degradation by the DCX(DCAF15) complex. Aryl sulfonamide anticancer drugs change the substrate specificity of DCAF15 by acting as a molecular glue that promotes binding between DCAF15 and weak affinity interactor RBM23. In terms of tissue distribution, highly expressed in placenta, liver, skeletal muscle, heart and kidney. Expressed at lower levels in the colon, thymus, spleen, small intestine and lung.

It is found in the nucleus. Its function is as follows. RNA-binding protein that acts both as a transcription coactivator and pre-mRNA splicing factor. Regulates steroid hormone receptor-mediated transcription, independently of the pre-mRNA splicing factor activity. This is Probable RNA-binding protein 23 from Homo sapiens (Human).